The chain runs to 132 residues: MVKHQTQKKGVKRKQLKNIPSGVVHVKATFNNTIVSITDPAGNVISWASAGKVGYSGSRKSSAFAATVAAQDAAKNAMNSGLKEVEVCLKGTGAGRESAVRALIAAGLVVSVIRDETPVPHNGCRPRKRRRV.

The protein belongs to the universal ribosomal protein uS11 family. Part of the 30S ribosomal subunit. Interacts with proteins S7 and S18. Binds to IF-3.

Its function is as follows. Located on the platform of the 30S subunit, it bridges several disparate RNA helices of the 16S rRNA. Forms part of the Shine-Dalgarno cleft in the 70S ribosome. The chain is Small ribosomal subunit protein uS11 from Chlamydia felis (strain Fe/C-56) (Chlamydophila felis).